Consider the following 368-residue polypeptide: Seven-bladed beta-propeller protein MSMEG_5308 (368 aa).

As to quaternary structure, interacts with MmpL3 and TtfA.

It is found in the cell septum. The protein resides in the cell tip. Its function is as follows. Stabilizes the MmpL3/TtfA trehalose monomycolate (TMM) transport complex under stress conditions. The protein is Seven-bladed beta-propeller protein MSMEG_5308 of Mycolicibacterium smegmatis (strain ATCC 700084 / mc(2)155) (Mycobacterium smegmatis).